The sequence spans 108 residues: ATP synthase peripheral stalk subunit F6, mitochondrial (108 aa).

The transit peptide at 1 to 32 (MILQRLFRFSSVIRSAVSVHLRRNIGVTAVAF) directs the protein to the mitochondrion. Lysine 41 and lysine 46 each carry N6-acetyllysine. Serine 65 bears the Phosphoserine mark. Lysine 79 bears the N6-acetyllysine mark. N6-acetyllysine; alternate is present on residues lysine 94 and lysine 99. Lysine 94 and lysine 99 each carry N6-succinyllysine; alternate. Lysine 105 carries the N6-acetyllysine modification.

This sequence belongs to the eukaryotic ATPase subunit F6 family. Component of the ATP synthase complex composed at least of ATP5F1A/subunit alpha, ATP5F1B/subunit beta, ATP5MC1/subunit c (homooctomer), MT-ATP6/subunit a, MT-ATP8/subunit 8, ATP5ME/subunit e, ATP5MF/subunit f, ATP5MG/subunit g, ATP5MK/subunit k, ATP5MJ/subunit j, ATP5F1C/subunit gamma, ATP5F1D/subunit delta, ATP5F1E/subunit epsilon, ATP5PF/subunit F6, ATP5PB/subunit b, ATP5PD/subunit d, ATP5PO/subunit OSCP. ATP synthase complex consists of a soluble F(1) head domain (subunits alpha(3) and beta(3)) - the catalytic core - and a membrane F(0) domain - the membrane proton channel (subunits c, a, 8, e, f, g, k and j). These two domains are linked by a central stalk (subunits gamma, delta, and epsilon) rotating inside the F1 region and a stationary peripheral stalk (subunits F6, b, d, and OSCP).

The protein resides in the mitochondrion. It localises to the mitochondrion inner membrane. Subunit F6, of the mitochondrial membrane ATP synthase complex (F(1)F(0) ATP synthase or Complex V) that produces ATP from ADP in the presence of a proton gradient across the membrane which is generated by electron transport complexes of the respiratory chain. ATP synthase complex consist of a soluble F(1) head domain - the catalytic core - and a membrane F(1) domain - the membrane proton channel. These two domains are linked by a central stalk rotating inside the F(1) region and a stationary peripheral stalk. During catalysis, ATP synthesis in the catalytic domain of F(1) is coupled via a rotary mechanism of the central stalk subunits to proton translocation. In vivo, can only synthesize ATP although its ATP hydrolase activity can be activated artificially in vitro. Part of the complex F(0) domain. Part of the complex F(0) domain and the peripheric stalk, which acts as a stator to hold the catalytic alpha(3)beta(3) subcomplex and subunit a/ATP6 static relative to the rotary elements. The sequence is that of ATP synthase peripheral stalk subunit F6, mitochondrial from Homo sapiens (Human).